A 387-amino-acid chain; its full sequence is Formate-dependent phosphoribosylglycinamide formyltransferase (387 aa).

N(1)-(5-phospho-beta-D-ribosyl)glycinamide is bound by residues 21–22 (EL) and glutamate 81. ATP contacts are provided by residues arginine 113, lysine 154, 159 to 164 (SSGHGQ), 193 to 196 (EEFV), and glutamate 201. The region spanning 118-306 (VFAAETLDLK…EFALHVRAVL (189 aa)) is the ATP-grasp domain. Glutamate 265 and glutamate 277 together coordinate Mg(2+). Residues aspartate 284, lysine 352, and 359-360 (RR) each bind N(1)-(5-phospho-beta-D-ribosyl)glycinamide.

The protein belongs to the PurK/PurT family. As to quaternary structure, homodimer.

The catalysed reaction is N(1)-(5-phospho-beta-D-ribosyl)glycinamide + formate + ATP = N(2)-formyl-N(1)-(5-phospho-beta-D-ribosyl)glycinamide + ADP + phosphate + H(+). The protein operates within purine metabolism; IMP biosynthesis via de novo pathway; N(2)-formyl-N(1)-(5-phospho-D-ribosyl)glycinamide from N(1)-(5-phospho-D-ribosyl)glycinamide (formate route): step 1/1. Functionally, involved in the de novo purine biosynthesis. Catalyzes the transfer of formate to 5-phospho-ribosyl-glycinamide (GAR), producing 5-phospho-ribosyl-N-formylglycinamide (FGAR). Formate is provided by PurU via hydrolysis of 10-formyl-tetrahydrofolate. This chain is Formate-dependent phosphoribosylglycinamide formyltransferase, found in Sulfurovum sp. (strain NBC37-1).